Here is a 3080-residue protein sequence, read N- to C-terminus: Protein PIEZO homolog (3080 aa).

6 helical membrane passes run 28–48, 57–77, 86–106, 113–133, 204–224, and 232–252; these read YIYF…SLIL, PIIT…VNVV, LSVN…WIVF, VIVF…LVYP, YPSI…LLLA, and VMLK…LFVY. Asn276 is a glycosylation site (N-linked (GlcNAc...) asparagine). A helical transmembrane segment spans residues 285–305; sequence WPLVIGYITVLLLYISTCILF. N-linked (GlcNAc...) asparagine glycans are attached at residues Asn312 and Asn339. Helical transmembrane passes span 362 to 382 and 396 to 416; these read ILVV…LASG and VIYI…IFNI. Asn434 carries an N-linked (GlcNAc...) asparagine glycan. A helical transmembrane segment spans residues 438 to 458; the sequence is WLYIGVQIVVSLTLSLYCFYS. Positions 469-548 are disordered; the sequence is KKDQQSQQSQ…GGGIIRPRKP (80 aa). Residues 473 to 505 show a composition bias toward low complexity; sequence QSQQSQPQPQQQQQQQQSSQNNQIQQSPLQYQQ. Residues 512 to 532 are compositionally biased toward polar residues; that stretch reads ISNKSLPSSPMSTKSTTVHIQ. N-linked (GlcNAc...) asparagine glycans are attached at residues Asn514, Asn567, and Asn606. A run of 3 helical transmembrane segments spans residues 672-692, 700-720, and 740-760; these read GLTS…VFVI, FWMC…IWQL, and YGSP…FSII. Asn795 is a glycosylation site (N-linked (GlcNAc...) asparagine). The next 3 helical transmembrane spans lie at 827–847, 849–869, and 872–892; these read FCYL…INIV, MATV…SIHI, and FWII…IMQF. Asn918 carries N-linked (GlcNAc...) asparagine glycosylation. The chain crosses the membrane as a helical span at residues 928–948; that stretch reads LFGCSSILVVCVFQLTVFFSI. An N-linked (GlcNAc...) asparagine glycan is attached at Asn992. The next 2 membrane-spanning stretches (helical) occupy residues 1036–1056 and 1067–1087; these read FAIS…MIVI and IGSF…AALL. A glycan (N-linked (GlcNAc...) asparagine) is linked at Asn1109. Residues 1158–1185 are disordered; that stretch reads QQQRKLEEHEEEYEEEEDQFGNKKNNDK. Residues 1166 to 1176 show a composition bias toward acidic residues; that stretch reads HEEEYEEEEDQ. Residues Asn1191, Asn1240, and Asn1251 are each glycosylated (N-linked (GlcNAc...) asparagine). Residues 1199 to 1253 form a disordered region; that stretch reads DDGNNNNNNNNNNNNNNNNNNNNNNNNNNNNNNNNNNNNNNNQSNNENNENNNNS. A compositionally biased stretch (low complexity) spans 1202–1252; sequence NNNNNNNNNNNNNNNNNNNNNNNNNNNNNNNNNNNNNNNQSNNENNENNNN. Transmembrane regions (helical) follow at residues 1281-1301, 1316-1336, and 1360-1380; these read VLAF…LIII, IYVS…ILVV, and LLLL…VLFF. Residues Asn1424 and Asn1440 are each glycosylated (N-linked (GlcNAc...) asparagine). A run of 2 helical transmembrane segments spans residues 1472–1492 and 1519–1539; these read VILI…SCFY and IYNW…ILYF. N-linked (GlcNAc...) asparagine glycans are attached at residues Asn1559 and Asn1589. Residues 1619-1639 form a helical membrane-spanning segment; sequence IETGPLSISTISDVIIMVLLA. Basic residues predominate over residues 1704–1714; that stretch reads RINRRKNRHNH. The segment at 1704–1812 is disordered; sequence RINRRKNRHN…NPLSNSSSTV (109 aa). The segment covering 1715–1742 has biased composition (low complexity); that stretch reads YYNNNPNNNYNNNNNNNNSNSSNSNNNN. N-linked (GlcNAc...) asparagine glycosylation is found at Asn1731, Asn1734, Asn1763, Asn1768, Asn1771, Asn1779, Asn1807, and Asn1864. Polar residues predominate over residues 1762-1782; it reads KNTTNQNATNSTYSPFANSTM. The span at 1789-1812 shows a compositional bias: low complexity; that stretch reads NNNNNNNNNNNFNNNPLSNSSSTV. 2 disordered regions span residues 1873–1899 and 1958–2032; these read LQQE…SSKE and SQLL…TSSS. The segment covering 1958–2021 has biased composition (low complexity); that stretch reads SQLLQQQQQQ…NNNNNNNNNN (64 aa). Asn2027 is a glycosylation site (N-linked (GlcNAc...) asparagine). A run of 2 helical transmembrane segments spans residues 2078–2098 and 2112–2132; these read IANG…AVFL and FWRF…VFQI. Asn2148 carries N-linked (GlcNAc...) asparagine glycosylation. The helical transmembrane segment at 2199 to 2219 threads the bilayer; the sequence is VFGLYIIDGHFISGAFWDLAI. Residues 2277–2367 are disordered; it reads LNNSPISLNS…NNNNNNNNNN (91 aa). N-linked (GlcNAc...) asparagine glycosylation occurs at Asn2285. Positions 2288-2367 are enriched in low complexity; the sequence is NNNNNNNNNN…NNNNNNNNNN (80 aa). 2 consecutive transmembrane segments (helical) span residues 2427 to 2447 and 2457 to 2477; these read IIIY…WLAI and YYMP…IFPQ. N-linked (GlcNAc...) asparagine glycosylation occurs at Asn2478. The next 4 membrane-spanning stretches (helical) occupy residues 2500 to 2520, 2530 to 2550, 2553 to 2573, and 2671 to 2691; these read YIVI…IYLY, QIVL…DLIV, FSFG…IYLY, and FVTG…PLII. 9 N-linked (GlcNAc...) asparagine glycosylation sites follow: Asn2762, Asn2790, Asn2837, Asn2840, Asn2848, Asn2858, Asn2908, Asn2913, and Asn2935. The disordered stretch occupies residues 2835 to 2863; sequence QSNNSNNSNNPNENSSSGSDDNNNNSNNN. Residues 2836 to 2863 show a composition bias toward low complexity; it reads SNNSNNSNNPNENSSSGSDDNNNNSNNN. The helical transmembrane segment at 2955 to 2975 threads the bilayer; that stretch reads ITSTLVSAGIIGLYVSVVLSV. Residues 3054-3080 are disordered; the sequence is PTINSTLNNQNNQNNNNNNNNNHEKIN. N-linked (GlcNAc...) asparagine glycosylation occurs at Asn3057. A compositionally biased stretch (low complexity) spans 3061–3074; the sequence is NNQNNQNNNNNNNN.

The protein belongs to the PIEZO (TC 1.A.75) family.

It localises to the membrane. The polypeptide is Protein PIEZO homolog (Dictyostelium discoideum (Social amoeba)).